A 450-amino-acid polypeptide reads, in one-letter code: Vimentin beta (450 aa).

Positions M1 to E81 are head. Polar residues predominate over residues S24 to T38. The interval S24–S56 is disordered. The segment covering S39–S56 has biased composition (low complexity). A coil 1A region spans residues F82–L117. The 309-residue stretch at E89–I397 folds into the IF rod domain. A linker 1 region spans residues T118–E139. Residues M140–L231 form a coil 1B region. Residues Q232–A254 are linker 12. The coil 2 stretch occupies residues L255–E393. The segment at E394 to E450 is tail.

The protein belongs to the intermediate filament family. As to quaternary structure, homomer. Post-translationally, one of the most prominent phosphoproteins in various cells of mesenchymal origin. Phosphorylation is enhanced during cell division, at which time vimentin filaments are significantly reorganized. Expressed in low amounts in retina, optic nerve, brain, and spinal cord and in very high amounts in eye lens.

Vimentins are class-III intermediate filaments found in various non-epithelial cells, especially mesenchymal cells. Vimentin is attached to the nucleus, endoplasmic reticulum, and mitochondria, either laterally or terminally. This is Vimentin beta from Carassius auratus (Goldfish).